Here is a 4456-residue protein sequence, read N- to C-terminus: Dynein axonemal heavy chain 2 (4456 aa).

Basic residues predominate over residues 1-12; the sequence is MASKAEKKRKVA. Positions 1 to 55 are disordered; that stretch reads MASKAEKKRKVAGRGGARAGRVVRAPQSTAGPGATEASLLPDGQEPEPESGKEDS. Residues 1 to 1795 form a stem region; that stretch reads MASKAEKKRK…RQTNTQFQYG (1795 aa). The stretch at 1218–1274 forms a coiled coil; that stretch reads LDQIAQMRAMLMAMRDEENNLRSNLGIFKIEQPVSKDLQILEKELDALQQVWEITRD. A TPR 1 repeat occupies 1439–1474; that stretch reads EDNQVALSTMKASRFVKAFEKDVDHWERCLSLILEV. AAA regions lie at residues 1794 to 2015, 2075 to 2302, 2407 to 2654, and 2751 to 3003; these read YGYE…LLRY, DTIE…DNCN, RYPP…VFQG, and EYNL…LRRY. ATP-binding positions include 1832 to 1839, 2113 to 2120, and 2445 to 2452; these read GPAGTGKT, GGTGSSKT, and GPVGTGKT. The TPR 2 repeat unit spans residues 2750–2783; the sequence is NEYNLSPSVVPMQLVLFREAIEHITRIVRVIGQP. Position 2791–2798 (2791–2798) interacts with ATP; it reads GIGGSGRQ. The segment at 3018 to 3301 is stalk; it reads YKKLLGEKRQ…EELRKKSEEM (284 aa). Residues 3041–3078 adopt a coiled-coil conformation; that stretch reads FKIDETREKVEVMSLELEDAKKKVAEFQKQCEEYLVII. A TPR 3 repeat occupies 3101–3134; sequence IEEVKCQALADNAQKDLEEALPALEEAMRALESL. 2 coiled-coil regions span residues 3245–3333 and 3552–3596; these read KRIR…EEDL and VRKE…GSLL. AAA regions lie at residues 3387 to 3617 and 3833 to 4052; these read LTNP…EVTE and VTSF…LLSL. TPR repeat units lie at residues 4101–4134 and 4135–4169; these read TTPF…LPSM and DPPE…QPQI.

This sequence belongs to the dynein heavy chain family. As to quaternary structure, part of the axonemal inner dynein arm complex that consists of at least two heavy chains and a number of intermediate and light chains. Interacts with DNAI4.

The protein localises to the cytoplasm. It is found in the cytoskeleton. It localises to the cilium axoneme. The protein resides in the flagellum axoneme. Functionally, as part of the axonemal inner dynein arm complex plays a central role in ciliary beat. Expressed in sperm flagellum, it is required for sperm motility. Dyneins are microtubule-based molecular motors possessing ATPase activities that can convert the chemical energy of ATP into relative sliding between adjacent microtubule doublets to generate ciliary bending. The polypeptide is Dynein axonemal heavy chain 2 (Mus musculus (Mouse)).